The following is a 324-amino-acid chain: Probable UDP-sugar transporter protein SLC35A4 (324 aa).

The Cytoplasmic portion of the chain corresponds to 1-18 (MSVEDGGVPGLARPRQAR). A helical membrane pass occupies residues 19-39 (WTLLLFLSTAMYGAHAPFLAL). Topologically, residues 40-52 (CHVDGRVPFRPSS) are lumenal. A helical membrane pass occupies residues 53 to 73 (AVLLTELTKLLLCAFSLLVGW). The Cytoplasmic portion of the chain corresponds to 74-85 (QTWPQGTPPWRQ). A helical transmembrane segment spans residues 86–106 (AVPFALSALLYGANNNLVIYL). At 107 to 142 (QRYMDPSTYQVLSNLKIGSTALLYCLCLGHRLSARQ) the chain is on the lumenal side. A helical transmembrane segment spans residues 143–163 (GLALLLLMAAGACYASGGFQE). Residues 164–180 (PVNTLPGPASAAGAHPM) lie on the Cytoplasmic side of the membrane. The helical transmembrane segment at 181 to 201 (PLHITPLGLLLLILYCLISGL) threads the bilayer. Topologically, residues 202–214 (SSVYTELIMKRQR) are lumenal. The chain crosses the membrane as a helical span at residues 215–235 (LPLALQNLFLYTFGVILNFGL). At 236 to 248 (YAGSGPGPGFLEG) the chain is on the cytoplasmic side. The chain crosses the membrane as a helical span at residues 249-271 (FSGWAVLVVLNQAVNGLLMSAVM). Residues 272–279 (KHGSSITR) are Lumenal-facing. Residues 280–300 (LFIVSCSLVVNAVLSAVLLQL) traverse the membrane as a helical segment. Residues 301-324 (QLTAIFFLAALLIGLAVCLYYGSP) lie on the Cytoplasmic side of the membrane.

The protein belongs to the nucleotide-sugar transporter family. SLC35A subfamily. As to quaternary structure, found in a complex with SLC35A2 and SLC35A3.

The protein resides in the golgi apparatus membrane. It carries out the reaction CDP-L-ribitol(in) + CDP(out) = CDP-L-ribitol(out) + CDP(in). In terms of biological role, mediates the transport of CDP-ribitol. Does not exhibit CMP-sialic acid, UDP-galactose and UDP-N-acetylglucosamine transport activity. The protein is Probable UDP-sugar transporter protein SLC35A4 of Mus musculus (Mouse).